The following is a 97-amino-acid chain: Large ribosomal subunit protein bL27 (97 aa).

Residues 1 to 9 (MFTFDLQLF) constitute a propeptide that is removed on maturation.

It belongs to the bacterial ribosomal protein bL27 family. Post-translationally, the N-terminus is cleaved by ribosomal processing cysteine protease Prp.

This chain is Large ribosomal subunit protein bL27, found in Syntrophomonas wolfei subsp. wolfei (strain DSM 2245B / Goettingen).